The following is a 211-amino-acid chain: Heat shock 70 kDa protein 4L (211 aa).

The residue at position 161 (Ser-161) is a Phosphoserine.

This sequence belongs to the heat shock protein 70 family. Homodimer.

The protein resides in the cytoplasm. Its subcellular location is the nucleus. Its function is as follows. Possesses chaperone activity in vitro where it inhibits aggregation of citrate synthase. In Mesocricetus auratus (Golden hamster), this protein is Heat shock 70 kDa protein 4L.